The primary structure comprises 342 residues: tRNA N6-adenosine threonylcarbamoyltransferase (342 aa).

Fe cation contacts are provided by H119 and H123. Residues 142–146, D175, G188, and N282 each bind substrate; that span reads VVSGG. Fe cation is bound at residue D310.

Belongs to the KAE1 / TsaD family. Requires Fe(2+) as cofactor.

The protein resides in the cytoplasm. It carries out the reaction L-threonylcarbamoyladenylate + adenosine(37) in tRNA = N(6)-L-threonylcarbamoyladenosine(37) in tRNA + AMP + H(+). Required for the formation of a threonylcarbamoyl group on adenosine at position 37 (t(6)A37) in tRNAs that read codons beginning with adenine. Is involved in the transfer of the threonylcarbamoyl moiety of threonylcarbamoyl-AMP (TC-AMP) to the N6 group of A37, together with TsaE and TsaB. TsaD likely plays a direct catalytic role in this reaction. The sequence is that of tRNA N6-adenosine threonylcarbamoyltransferase from Moorella thermoacetica (strain ATCC 39073 / JCM 9320).